The chain runs to 331 residues: Putative sigma L-dependent transcriptional regulator YplP (331 aa).

Positions 12–213 constitute a Sigma-54 factor interaction domain; that stretch reads HLIGEHQTFL…LKNAADYMAA (202 aa). 95–104 lines the ATP pocket; it reads AVRGTLFLDD.

May play a role in cold adaptation. The protein is Putative sigma L-dependent transcriptional regulator YplP (yplP) of Bacillus subtilis (strain 168).